Consider the following 805-residue polypeptide: Probable exo-1,4-beta-xylosidase xlnD (805 aa).

Positions 1 to 17 (MAVAALALLALLPQALG) are cleaved as a signal peptide. 5 N-linked (GlcNAc...) asparagine glycosylation sites follow: N20, N115, N140, N235, and N244. D308 is an active-site residue. N-linked (GlcNAc...) asparagine glycosylation is found at N350, N383, N405, N434, N445, N486, N490, N622, N653, N667, N689, and N711.

This sequence belongs to the glycosyl hydrolase 3 family.

The protein localises to the secreted. It carries out the reaction Hydrolysis of (1-&gt;4)-beta-D-xylans, to remove successive D-xylose residues from the non-reducing termini.. It functions in the pathway glycan degradation; xylan degradation. Xylan 1,4-beta-xylosidase involved in the hydrolysis of xylan, a major structural heterogeneous polysaccharide found in plant biomass representing the second most abundant polysaccharide in the biosphere, after cellulose. In Aspergillus aculeatus, this protein is Probable exo-1,4-beta-xylosidase xlnD (xlnD).